Consider the following 284-residue polypeptide: Ribosomal RNA small subunit methyltransferase A (284 aa).

S-adenosyl-L-methionine-binding residues include Asn26, Leu28, Gly53, Glu74, Asp97, and Asn127.

It belongs to the class I-like SAM-binding methyltransferase superfamily. rRNA adenine N(6)-methyltransferase family. RsmA subfamily.

Its subcellular location is the cytoplasm. It carries out the reaction adenosine(1518)/adenosine(1519) in 16S rRNA + 4 S-adenosyl-L-methionine = N(6)-dimethyladenosine(1518)/N(6)-dimethyladenosine(1519) in 16S rRNA + 4 S-adenosyl-L-homocysteine + 4 H(+). Functionally, specifically dimethylates two adjacent adenosines (A1518 and A1519) in the loop of a conserved hairpin near the 3'-end of 16S rRNA in the 30S particle. May play a critical role in biogenesis of 30S subunits. The sequence is that of Ribosomal RNA small subunit methyltransferase A from Anaeromyxobacter dehalogenans (strain 2CP-1 / ATCC BAA-258).